Consider the following 321-residue polypeptide: Ribonuclease Z (321 aa).

Positions 62, 64, 66, 67, 139, 210, and 268 each coordinate Zn(2+). The active-site Proton acceptor is aspartate 66.

It belongs to the RNase Z family. As to quaternary structure, homodimer. Zn(2+) is required as a cofactor.

It catalyses the reaction Endonucleolytic cleavage of RNA, removing extra 3' nucleotides from tRNA precursor, generating 3' termini of tRNAs. A 3'-hydroxy group is left at the tRNA terminus and a 5'-phosphoryl group is left at the trailer molecule.. In terms of biological role, zinc phosphodiesterase, which displays some tRNA 3'-processing endonuclease activity. Probably involved in tRNA maturation, by removing a 3'-trailer from precursor tRNA. This is Ribonuclease Z from Trichodesmium erythraeum (strain IMS101).